We begin with the raw amino-acid sequence, 67 residues long: Beta-defensin 9 (67 aa).

Positions methionine 1–serine 24 are cleaved as a signal peptide. Cystine bridges form between cysteine 34–cysteine 62, cysteine 41–cysteine 55, and cysteine 45–cysteine 63.

Belongs to the beta-defensin family. In terms of tissue distribution, weakly expressed in adult and neonatal brain.

Its subcellular location is the secreted. Has antibacterial activity. The chain is Beta-defensin 9 (Defb9) from Mus musculus (Mouse).